Here is a 213-residue protein sequence, read N- to C-terminus: Orotidine 5'-phosphate decarboxylase (213 aa).

Residues Asp6, Lys25, 52–61, Ser109, 158–168, Gly181, and Arg182 each bind substrate; these read DLKLADIDNT and PGVGAQGAMIG. Lys54 acts as the Proton donor in catalysis.

This sequence belongs to the OMP decarboxylase family. Type 1 subfamily. Homodimer.

The enzyme catalyses orotidine 5'-phosphate + H(+) = UMP + CO2. Its pathway is pyrimidine metabolism; UMP biosynthesis via de novo pathway; UMP from orotate: step 2/2. Its function is as follows. Catalyzes the decarboxylation of orotidine 5'-monophosphate (OMP) to uridine 5'-monophosphate (UMP). The polypeptide is Orotidine 5'-phosphate decarboxylase (Sulfurisphaera tokodaii (strain DSM 16993 / JCM 10545 / NBRC 100140 / 7) (Sulfolobus tokodaii)).